We begin with the raw amino-acid sequence, 318 residues long: Formimidoylglutamase (318 aa).

The Mn(2+) site is built by histidine 124, aspartate 153, histidine 155, aspartate 157, cysteine 241, and aspartate 243.

Belongs to the arginase family. Requires Mn(2+) as cofactor.

It carries out the reaction N-formimidoyl-L-glutamate + H2O = formamide + L-glutamate. Its pathway is amino-acid degradation; L-histidine degradation into L-glutamate; L-glutamate from N-formimidoyl-L-glutamate (hydrolase route): step 1/1. In terms of biological role, catalyzes the conversion of N-formimidoyl-L-glutamate to L-glutamate and formamide. The sequence is that of Formimidoylglutamase from Fusobacterium nucleatum subsp. nucleatum (strain ATCC 25586 / DSM 15643 / BCRC 10681 / CIP 101130 / JCM 8532 / KCTC 2640 / LMG 13131 / VPI 4355).